The sequence spans 648 residues: ATP-dependent zinc metalloprotease FtsH 4 (648 aa).

Residues 1–6 (MKQSHK) are Cytoplasmic-facing. A helical transmembrane segment spans residues 7 to 27 (TLLLWVLLIMMFLAIWQFLSP). Over 28 to 111 (DSRPATQVAF…VFFEKEDTSP (84 aa)) the chain is Periplasmic. A helical membrane pass occupies residues 112 to 132 (FWPGAIMYLLPTVFLLVMFYL). Residues 133-648 (FMRQLQAGGG…FGTPKPAPST (516 aa)) lie on the Cytoplasmic side of the membrane. 205–212 (GPPGTGKT) contacts ATP. Histidine 427 provides a ligand contact to Zn(2+). The active site involves glutamate 428. Zn(2+) contacts are provided by histidine 431 and aspartate 504. Residues 622–648 (YSDRDRAAKEKRRAASIFGTPKPAPST) form a disordered region.

The protein in the central section; belongs to the AAA ATPase family. This sequence in the C-terminal section; belongs to the peptidase M41 family. As to quaternary structure, homohexamer. Requires Zn(2+) as cofactor.

The protein localises to the cell inner membrane. Its function is as follows. Acts as a processive, ATP-dependent zinc metallopeptidase for both cytoplasmic and membrane proteins. Plays a role in the quality control of integral membrane proteins. The chain is ATP-dependent zinc metalloprotease FtsH 4 from Sorangium cellulosum (strain So ce56) (Polyangium cellulosum (strain So ce56)).